The chain runs to 577 residues: Autophagy-related protein 20 (577 aa).

The disordered stretch occupies residues 57–81 (GQSYVAPHSGGGRTSSGSSSSASLQ). Positions 95–239 (GEQGRVRILE…DFLDPNNANW (145 aa)) constitute a PX domain. Residues arginine 131, serine 133, lysine 157, and arginine 205 each contribute to the a 1,2-diacyl-sn-glycero-3-phospho-(1D-myo-inositol-3-phosphate) site.

The protein belongs to the sorting nexin family.

It localises to the endosome membrane. The protein localises to the preautophagosomal structure membrane. In terms of biological role, required for cytoplasm to vacuole transport (Cvt), pexophagy and mitophagy. Also involved in endoplasmic reticulum-specific autophagic process and is essential for the survival of cells subjected to severe ER stress. Functions in protein retrieval from the endocytic pathway. This Eremothecium gossypii (strain ATCC 10895 / CBS 109.51 / FGSC 9923 / NRRL Y-1056) (Yeast) protein is Autophagy-related protein 20 (ATG20).